A 305-amino-acid chain; its full sequence is Short-chain dehydrogenase/reductase VdtF (305 aa).

Leu-28 and Asn-98 together coordinate NADP(+). The Proton donor role is filled by Ser-192. NADP(+) contacts are provided by Tyr-206, Lys-210, and Thr-241. Tyr-206 functions as the Proton acceptor in the catalytic mechanism. Catalysis depends on Lys-210, which acts as the Lowers pKa of active site Tyr.

It belongs to the short-chain dehydrogenases/reductases (SDR) family.

It catalyses the reaction methyl 2-[(3S)-9,10-dihydroxy-7-methoxy-1-oxo-1H,3H,4H-naphtho[2,3-c]pyran-3-yl]acetate + AH2 = semiviriditoxin + A. The catalysed reaction is 9,10-dihydroxy-7-methoxy-3-(2-oxopropyl)-1H-benzo[g]isochromen-1-one + AH2 = (3S)-9,10-dihydroxy-7-methoxy-3-(2-oxopropyl)-1H,3H,4H-naphtho[2,3-c]pyran-1-one + A. It functions in the pathway secondary metabolite biosynthesis. In terms of biological role, short-chain dehydrogenase/reductase; part of the gene cluster that mediates the biosynthesis of viriditoxin, one of the 'classical' secondary metabolites produced by fungi and that has antibacterial activity. The first step is performed by the polyketide synthase VdtA which condenses one acetyl-CoA and 6 malonyl-CoA units to form the heptaketide monomer backbone of viriditoxin. The product of VdtA is then O-methylated on C7 by the O-methyltransferase VdtC. The O-methyl group is important for the stereoselective coupling of the monomers at the final step of viriditoxin biosynthesis. The short-chain dehydrogenase/reductase VdtF then acts as a stereospecific reductase converting the pyrone to dihydropyrone via the reduction of the C3-C4 double bond. The FAD-binding monooxygenase VdtE then converts the ketone group into a methyl-ester group to yield semi-viriditoxin. Finally, the laccase VdtB is involved in dimerization of 2 semi-viriditoxin molecules to yield the final viriditoxin. VdtB is responsible for the regioselective 6,6'-coupling of semi-viriditoxin, which yields (M)-viriditoxin and (P)-viriditoxin at a ratio of 1:2. The non-catalytic carboxylesterase-like protein VdtD affects the stereochemistical outcome of the coupling. The highly reducing polyketide synthase VdtX is not involved in viriditoxin synthesis, but might possibly play a role in the production of additional metabolites not identified yet. The sequence is that of Short-chain dehydrogenase/reductase VdtF from Byssochlamys spectabilis (Paecilomyces variotii).